The primary structure comprises 1855 residues: Unconventional myosin-Va (1855 aa).

A2 is modified (N-acetylalanine). Residues 8-60 (TKFARVWIPDPEEVWKSAELLKDYKPGDKVLLLHLEEGKDLEYHLDPKTKELP) form the Myosin N-terminal SH3-like domain. The 695-residue stretch at 69-763 (VGENDLTALS…QVAYLEKLRA (695 aa)) folds into the Myosin motor domain. 163–170 (GESGAGKT) provides a ligand contact to ATP. The disordered stretch occupies residues 598-631 (AISPTSATSSGRTPLTRTPAKPTKGRPGQMAKEH). S600 carries the phosphoserine modification. Polar residues predominate over residues 600-613 (SPTSATSSGRTPLT). Residues 643–665 (LHLLMETLNATTPHYVRCIKPND) are actin-binding. IQ domains lie at 766 to 788 (LRAACIRIQKTIRGWLLRKKYLR), 789 to 818 (MRKAAITMQRYVRGYQARCYAKFLRRTKAA), 814 to 836 (RTKAATIIQKYWRMYVVRRRYKI), 837 to 861 (RRAATIVLQSYLRGFLARNRYRKIL), 862 to 883 (REHKAVIIQKRVRGWLARTHYK), and 885 to 914 (SMHAIIYLQCCFRRMMAKRELKKLKIEARS). Coiled-coil stretches lie at residues 914 to 1237 (SVER…APEV) and 1338 to 1445 (VYEG…ELEV). T1032 carries the phosphothreonine modification. Residues S1452 and S1652 each carry the phosphoserine modification. Residues 1534–1810 (TSTINSIKKV…IRTIQMRLRD (277 aa)) enclose the Dilute domain. At T1760 the chain carries Phosphothreonine.

Belongs to the TRAFAC class myosin-kinesin ATPase superfamily. Myosin family. In terms of assembly, may be a homodimer, which associates with multiple calmodulin or myosin light chains. Interacts with RIPL2, the interaction is required for its role in dendrite formation. Interacts with MLPH. Interacts with SYTL4. Interacts with MYRIP. Interacts with RAB10; mediates the transport to the plasma membrane of SLC2A4/GLUT4 storage vesicles. Interacts with FMR1; this interaction occurs in association with polyribosome. Detected in melanocytes.

It carries out the reaction ATP + H2O = ADP + phosphate + H(+). Functionally, processive actin-based motor that can move in large steps approximating the 36-nm pseudo-repeat of the actin filament. Can hydrolyze ATP in the presence of actin, which is essential for its function as a motor protein. Involved in melanosome transport. Also mediates the transport of vesicles to the plasma membrane. May also be required for some polarization process involved in dendrite formation. In Homo sapiens (Human), this protein is Unconventional myosin-Va (MYO5A).